A 425-amino-acid polypeptide reads, in one-letter code: 3-phosphoshikimate 1-carboxyvinyltransferase (425 aa).

3 residues coordinate 3-phosphoshikimate: Lys21, Ser22, and Arg26. Lys21 provides a ligand contact to phosphoenolpyruvate. 2 residues coordinate phosphoenolpyruvate: Gly91 and Arg119. Residues Ser164, Gln166, Asp311, and Lys338 each contribute to the 3-phosphoshikimate site. Gln166 provides a ligand contact to phosphoenolpyruvate. The active-site Proton acceptor is the Asp311. The phosphoenolpyruvate site is built by Arg342 and Arg383.

Belongs to the EPSP synthase family. Monomer.

The protein localises to the cytoplasm. The enzyme catalyses 3-phosphoshikimate + phosphoenolpyruvate = 5-O-(1-carboxyvinyl)-3-phosphoshikimate + phosphate. The protein operates within metabolic intermediate biosynthesis; chorismate biosynthesis; chorismate from D-erythrose 4-phosphate and phosphoenolpyruvate: step 6/7. Its function is as follows. Catalyzes the transfer of the enolpyruvyl moiety of phosphoenolpyruvate (PEP) to the 5-hydroxyl of shikimate-3-phosphate (S3P) to produce enolpyruvyl shikimate-3-phosphate and inorganic phosphate. This is 3-phosphoshikimate 1-carboxyvinyltransferase from Campylobacter fetus subsp. fetus (strain 82-40).